Consider the following 889-residue polypeptide: Rho GTPase-activating protein 27 (889 aa).

The SH3 domain occupies 6–69 (VGDVYVLVEH…PAQYVRELPA (64 aa)). The segment at 104 to 132 (AGPDGAPEESGGRASSLCGPAQRGAATQR) is disordered. 3 positions are modified to phosphoserine: S156, S216, and S249. WW domains are found at residues 246–280 (PLPSPVWETHTDAGTGRPYYYNPDTGVTTWESPFE) and 299–333 (VSLETEWGQYWDEESRRVFFYNPLTGETAWEDEAE). Over residues 329-341 (EDEAENEPEEELE) the composition is skewed to acidic residues. Residues 329–397 (EDEAENEPEE…SPLTTPPGWS (69 aa)) form a disordered region. The residue at position 347 (S347) is a Phosphoserine. A compositionally biased stretch (low complexity) spans 383 to 395 (EPGPTSPLTTPPG). One can recognise a WW 3 domain in the interval 411-444 (HFTQEQWVRLEDPHGKPYFYNPEDSSVRWELPQV). The segment at 447–474 (PAPRSIHKSSQDGDTPAQASPPEEKVPA) is disordered. Phosphoserine is present on S456. At T461 the chain carries Phosphothreonine. Position 466 is a phosphoserine (S466). The 117-residue stretch at 496–612 (TLDKAGVLHR…WHKAIAQGIQ (117 aa)) folds into the PH domain. A disordered region spans residues 617 to 655 (ELPPEESESSRVDFGSSERLGSWQEKEEDARPNAAAPAL). The region spanning 697–886 (CALAALCERE…LILQQCADIF (190 aa)) is the Rho-GAP domain.

Interacts with SH3KBP1/CIN85. As to expression, expressed in germinal center B-cell, spleen, chronic lymphocytic leukemia, pancreatic cancer and lung cancer.

The protein localises to the cytoplasm. It is found in the membrane. In terms of biological role, rho GTPase-activating protein which may be involved in clathrin-mediated endocytosis. GTPase activators for the Rho-type GTPases act by converting them to an inactive GDP-bound state. Has activity toward CDC42 and RAC1. The sequence is that of Rho GTPase-activating protein 27 from Homo sapiens (Human).